A 602-amino-acid chain; its full sequence is Glutamyl-tRNA(Gln) amidotransferase subunit B, mitochondrial (602 aa).

The N-terminal 52 residues, 1–52 (MLQQWLRQSPAAAGLLRCSRYRGPQAALLQLSPQRAPTYHAIRSLQTSAAES), are a transit peptide targeting the mitochondrion. A disordered region spans residues 61 to 83 (QLKQGAKGLKAQKRQRRESEEAS).

It belongs to the GatB/GatE family. GatB subfamily. As to quaternary structure, subunit of the heterotrimeric GatCAB amidotransferase (AdT) complex, composed of A, B and C subunits.

It is found in the mitochondrion. It carries out the reaction L-glutamyl-tRNA(Gln) + L-glutamine + ATP + H2O = L-glutaminyl-tRNA(Gln) + L-glutamate + ADP + phosphate + H(+). Functionally, allows the formation of correctly charged Gln-tRNA(Gln) through the transamidation of misacylated Glu-tRNA(Gln) in the mitochondria. The reaction takes place in the presence of glutamine and ATP through an activated gamma-phospho-Glu-tRNA(Gln). This is Glutamyl-tRNA(Gln) amidotransferase subunit B, mitochondrial from Aspergillus clavatus (strain ATCC 1007 / CBS 513.65 / DSM 816 / NCTC 3887 / NRRL 1 / QM 1276 / 107).